The following is a 60-amino-acid chain: Snake venom metalloproteinase bothrojaractivase (60 aa).

Positions R1 to I60 constitute a Peptidase M12B domain. Residue E4 participates in Ca(2+) binding.

This sequence belongs to the venom metalloproteinase (M12B) family. P-I subfamily. As to quaternary structure, monomer. The cofactor is Zn(2+). In terms of tissue distribution, expressed by the venom gland.

Its subcellular location is the secreted. Its activity is regulated as follows. Completely inhibited by EDTA and EGTA. Partially inhibited by serine proteinase inhibitors PMSF and benzamidine. Not inhibited by cysteine proteinase inhibitors mercury ions and E-64. Is active without cofactors, although the presence of low concentrations of calcium and zinc ions enhanced its ability to convert prothrombin (F2) into active thrombin. Its function is as follows. Prothrombin (F2) activator that is cofactor-independent. Also has fibrinolytic and fibrinogenolytic activity. It degrades the Aalpha-chain and more slowly the Bbeta-chain of fibrin and fibrinogen, while the gamma-chain is only partially and slowly affected. A dose-dependent procoagulant activity is shown in human plasma. This chain is Snake venom metalloproteinase bothrojaractivase, found in Bothrops jararaca (Jararaca).